A 433-amino-acid polypeptide reads, in one-letter code: Adenylosuccinate synthetase (433 aa).

GTP-binding positions include 11–17 and 39–41; these read GDEGKGK and GHT. Aspartate 12 (proton acceptor) is an active-site residue. Mg(2+) contacts are provided by aspartate 12 and glycine 39. Residues 12-15, 37-40, threonine 134, arginine 148, asparagine 230, threonine 245, and arginine 309 each bind IMP; these read DEGK and NAGH. Histidine 40 (proton donor) is an active-site residue. 305–311 lines the substrate pocket; the sequence is VTTGRKR. Residues arginine 311, 337–339, and 419–421 contribute to the GTP site; these read KLD and GTG.

The protein belongs to the adenylosuccinate synthetase family. In terms of assembly, homodimer. Mg(2+) is required as a cofactor.

It is found in the cytoplasm. It carries out the reaction IMP + L-aspartate + GTP = N(6)-(1,2-dicarboxyethyl)-AMP + GDP + phosphate + 2 H(+). It functions in the pathway purine metabolism; AMP biosynthesis via de novo pathway; AMP from IMP: step 1/2. Its function is as follows. Plays an important role in the de novo pathway and in the salvage pathway of purine nucleotide biosynthesis. Catalyzes the first committed step in the biosynthesis of AMP from IMP. This is Adenylosuccinate synthetase from Saccharomyces cerevisiae (strain AWRI1631) (Baker's yeast).